We begin with the raw amino-acid sequence, 313 residues long: Proline iminopeptidase (313 aa).

In terms of domain architecture, AB hydrolase-1 spans 35-298; sequence KPVVILHGGP…TPGAGHSAFE (264 aa). Ser-110 functions as the Nucleophile in the catalytic mechanism. Asp-266 is an active-site residue. Catalysis depends on His-294, which acts as the Proton donor.

It belongs to the peptidase S33 family.

Its subcellular location is the cytoplasm. It carries out the reaction Release of N-terminal proline from a peptide.. Its function is as follows. Specifically catalyzes the removal of N-terminal proline residues from peptides. This chain is Proline iminopeptidase (pip), found in Xylella fastidiosa (strain Temecula1 / ATCC 700964).